The sequence spans 399 residues: Phosphoglycerate kinase (399 aa).

Substrate contacts are provided by residues 24 to 26 (DLN), arginine 41, 64 to 67 (HLGR), arginine 123, and arginine 160. Residues lysine 210, glycine 298, glutamate 329, and 355-358 (GGDS) contribute to the ATP site.

Belongs to the phosphoglycerate kinase family. In terms of assembly, monomer.

The protein localises to the cytoplasm. It catalyses the reaction (2R)-3-phosphoglycerate + ATP = (2R)-3-phospho-glyceroyl phosphate + ADP. It functions in the pathway carbohydrate degradation; glycolysis; pyruvate from D-glyceraldehyde 3-phosphate: step 2/5. The polypeptide is Phosphoglycerate kinase (Salinispora arenicola (strain CNS-205)).